The sequence spans 43 residues: Histone H3 (43 aa).

The nucleosome is a histone octamer containing two molecules each of H2A, H2B, H3 and H4 assembled in one H3-H4 heterotetramer and two H2A-H2B heterodimers. The octamer wraps approximately 147 bp of DNA.

The protein resides in the nucleus. The protein localises to the chromosome. Its function is as follows. Core component of nucleosome. Nucleosomes wrap and compact DNA into chromatin, limiting DNA accessibility to the cellular machineries which require DNA as a template. Histones thereby play a central role in transcription regulation, DNA repair, DNA replication and chromosomal stability. DNA accessibility is regulated via a complex set of post-translational modifications of histones, also called histone code, and nucleosome remodeling. This is Histone H3 from Penaeus vannamei (Whiteleg shrimp).